The sequence spans 828 residues: Isethionate sulfite-lyase (828 aa).

A PFL domain is found at 30–698 (ERVFTILESF…VVSATPNGRK (669 aa)). 2-hydroxyethane-1-sulfonate contacts are provided by residues R187, Q191, 466 to 468 (CTE), and R676. Residue C466 is the Cysteine radical intermediate of the active site. E468 functions as the Proton acceptor in the catalytic mechanism. The 124-residue stretch at 705-828 (DGSSASHGAD…LIARTGHDVM (124 aa)) folds into the Glycine radical domain. Position 803 is a glycine radical (G803).

The protein belongs to the glycyl radical enzyme (GRE) family. In terms of assembly, homodimer. In terms of processing, requires the activating protein IseH to generate the key active site glycyl radical on Gly-803 that is involved in catalysis.

It catalyses the reaction 2-hydroxyethane-1-sulfonate = acetaldehyde + sulfite + H(+). It functions in the pathway organosulfur degradation; alkanesulfonate degradation. Functionally, involved in an anaerobic respiration pathway that converts the sulfonate isethionate (2-hydroxyethanesulfonate) to ammonia, acetate and sulfide. Catalyzes the radical-mediated C-S bond cleavage of isethionate (2-hydroxyethanesulfonate) to form sulfite and acetaldehyde. Shows no activity with taurine or ethanolamine as substrates. The polypeptide is Isethionate sulfite-lyase (Nitratidesulfovibrio vulgaris (strain ATCC 29579 / DSM 644 / CCUG 34227 / NCIMB 8303 / VKM B-1760 / Hildenborough) (Desulfovibrio vulgaris)).